A 458-amino-acid polypeptide reads, in one-letter code: Preferentially expressed antigen in melanoma-like protein 1 (458 aa).

The LRR 1; degenerate repeat unit spans residues 99 to 126 (RCKLQVLDLRVMPLKLWNRLPVFGTAGC). An LRR 2; degenerate repeat occupies 176–200 (SLCCCKLQIWAMSMYYHRKLLEILD). The stretch at 201-227 (LDSVQELRMYCISNPVCLLNFAPYLGR) is one LRR 3; degenerate repeat. The stretch at 228-263 (MRNLRCLILSHLWQTFSMTPVEKQQVITQFTSQFLK) is one LRR 4; degenerate repeat. 5 LRR repeats span residues 264 to 289 (LKCL…FWWL), 290 to 321 (KTPL…SQLK), 322 to 340 (HLNL…PLRV), 346 to 373 (ASTL…ALRC), and 374 to 398 (CTQL…LAYN).

This sequence belongs to the PRAME family. As to expression, specifically expressed in testis (at protein level).

It is found in the cytoplasm. The protein resides in the cytoplasmic vesicle. It localises to the secretory vesicle. The protein localises to the acrosome. Its subcellular location is the cell projection. It is found in the cilium. The protein resides in the flagellum. Functionally, may play a role in acrosome development and also in sperm maturation and motility. In Mus musculus (Mouse), this protein is Preferentially expressed antigen in melanoma-like protein 1.